A 371-amino-acid chain; its full sequence is Outer membrane protein P2 (371 aa).

The N-terminal stretch at 1 to 20 is a signal peptide; it reads MKKTLAALIVGAFAASAANA.

Belongs to the Gram-negative porin family. In terms of assembly, homotrimer.

The protein resides in the cell outer membrane. Functionally, forms pores that allow passive diffusion of small molecules across the outer membrane. This Haemophilus influenzae protein is Outer membrane protein P2 (ompP2).